The primary structure comprises 351 residues: Hydroxymethylglutaryl-CoA synthase (351 aa).

Aspartate 28 contacts (3S)-3-hydroxy-3-methylglutaryl-CoA. Residue glutamate 80 is the Proton donor/acceptor of the active site. (3S)-3-hydroxy-3-methylglutaryl-CoA-binding residues include cysteine 112 and threonine 153. Cysteine 112 (acyl-thioester intermediate) is an active-site residue. Arginine 199 serves as a coordination point for CoA. (3S)-3-hydroxy-3-methylglutaryl-CoA is bound by residues threonine 201 and histidine 234. Histidine 234 (proton donor/acceptor) is an active-site residue. Lysine 239 contacts CoA. (3S)-3-hydroxy-3-methylglutaryl-CoA is bound by residues arginine 243, asparagine 266, and serine 296.

This sequence belongs to the thiolase-like superfamily. Archaeal HMG-CoA synthase family. As to quaternary structure, interacts with acetoacetyl-CoA thiolase that catalyzes the precedent step in the pathway and with a DUF35 protein. The acetoacetyl-CoA thiolase/HMG-CoA synthase complex channels the intermediate via a fused CoA-binding site, which allows for efficient coupling of the endergonic thiolase reaction with the exergonic HMGCS reaction.

The enzyme catalyses acetoacetyl-CoA + acetyl-CoA + H2O = (3S)-3-hydroxy-3-methylglutaryl-CoA + CoA + H(+). Its pathway is metabolic intermediate biosynthesis; (R)-mevalonate biosynthesis; (R)-mevalonate from acetyl-CoA: step 2/3. Functionally, catalyzes the condensation of acetyl-CoA with acetoacetyl-CoA to form 3-hydroxy-3-methylglutaryl-CoA (HMG-CoA). Functions in the mevalonate (MVA) pathway leading to isopentenyl diphosphate (IPP), a key precursor for the biosynthesis of isoprenoid compounds that are building blocks of archaeal membrane lipids. In Picrophilus torridus (strain ATCC 700027 / DSM 9790 / JCM 10055 / NBRC 100828 / KAW 2/3), this protein is Hydroxymethylglutaryl-CoA synthase.